The following is a 119-amino-acid chain: uncharacterized protein (119 aa).

Positions 1–18 (MPAVFMLASSSALQCGRG) are cleaved as a signal peptide. The tract at residues 23–100 (PRTEVGAGHS…MFPGPLRGPA (78 aa)) is disordered. Residues 43-71 (GNQTSVIPATSRQAALGTSWTQRRTQPLQ) show a composition bias toward polar residues. Asparagine 44 is a glycosylation site (N-linked (GlcNAc...) asparagine).

The protein localises to the secreted. This is an uncharacterized protein from Homo sapiens (Human).